Reading from the N-terminus, the 360-residue chain is Ribosomal RNA large subunit methyltransferase M (360 aa).

Residues S187, 220 to 223 (CPGG), D239, D259, and D276 contribute to the S-adenosyl-L-methionine site. Residue K305 is the Proton acceptor of the active site.

The protein belongs to the class I-like SAM-binding methyltransferase superfamily. RNA methyltransferase RlmE family. RlmM subfamily. Monomer.

It localises to the cytoplasm. It catalyses the reaction cytidine(2498) in 23S rRNA + S-adenosyl-L-methionine = 2'-O-methylcytidine(2498) in 23S rRNA + S-adenosyl-L-homocysteine + H(+). Catalyzes the 2'-O-methylation at nucleotide C2498 in 23S rRNA. In Shewanella halifaxensis (strain HAW-EB4), this protein is Ribosomal RNA large subunit methyltransferase M.